The sequence spans 152 residues: Natriuretic peptides A (152 aa).

Residues M1–A24 form the signal peptide. 2 consecutive propeptides follow at residues N25 to R122 and E92 to G102. The disordered stretch occupies residues M50–V108. A Phosphoserine modification is found at S128. A disulfide bridge links C129 with C145. The important for degradation of atrial natriuretic peptide by IDE stretch occupies residues N146–Y150.

The protein belongs to the natriuretic peptide family. Homodimer; disulfide-linked antiparallel dimer. Post-translationally, the precursor molecule is proteolytically cleaved by CORIN at Arg-122 to produce the atrial natriuretic peptide. Undergoes further proteolytic cleavage by unknown proteases to give rise to long-acting natriuretic peptide, vessel dilator and kaliuretic peptide. Additional processing gives rise to the auriculin and atriopeptin peptides. In the kidneys, alternative processing by an unknown protease results in the peptide urodilatin. In terms of processing, cleavage by MME initiates degradation of the factor and thereby regulates its activity. Degradation by IDE results in reduced activation of NPR1 (in vitro). During IDE degradation, the resulting products can temporarily stimulate NPR2 to produce cGMP, before the fragments are completely degraded and inactivated by IDE (in vitro). Degraded by IDE. Post-translationally, phosphorylation on Ser-128 decreases vasorelaxant activity.

The protein resides in the secreted. The protein localises to the perikaryon. Its subcellular location is the cell projection. Hormone that plays a key role in mediating cardio-renal homeostasis, and is involved in vascular remodeling and regulating energy metabolism. Acts by specifically binding and stimulating NPR1 to produce cGMP, which in turn activates effector proteins, such as PRKG1, that drive various biological responses. Regulates vasodilation, natriuresis, diuresis and aldosterone synthesis and is therefore essential for regulating blood pressure, controlling the extracellular fluid volume and maintaining the fluid-electrolyte balance. Also involved in inhibiting cardiac remodeling and cardiac hypertrophy by inducing cardiomyocyte apoptosis and attenuating the growth of cardiomyocytes and fibroblasts. Plays a role in female pregnancy by promoting trophoblast invasion and spiral artery remodeling in uterus, and thus prevents pregnancy-induced hypertension. In adipose tissue, acts in various cGMP- and PKG-dependent pathways to regulate lipid metabolism and energy homeostasis. This includes up-regulating lipid metabolism and mitochondrial oxygen utilization by activating the AMP-activated protein kinase (AMPK), and increasing energy expenditure by acting via MAPK11 to promote the UCP1-dependent thermogenesis of brown adipose tissue. Binds the clearance receptor NPR3 which removes the hormone from circulation. In terms of biological role, may have a role in cardio-renal homeostasis through regulation of natriuresis, diuresis, vasodilation, and inhibiting aldosterone synthesis. In vitro, promotes the production of cGMP and induces vasodilation. May promote natriuresis, at least in part, by enhancing prostaglandin E2 synthesis resulting in the inhibition of renal Na+-K+-ATPase. However reports on the involvement of this peptide in mammal blood volume and blood pressure homeostasis are conflicting; according to a report, in vivo it is not sufficient to activate cGMP and does not inhibit collecting duct transport nor effect diuresis and natriuresis. Appears to bind to specific receptors that are distinct from the receptors bound by atrial natriuretic peptide and vessel dilator. Possibly enhances protein excretion in urine by decreasing proximal tubular protein reabsorption. Its function is as follows. May have a role in cardio-renal homeostasis through regulation of natriuresis, diuresis, and vasodilation. In vitro, promotes the production of cGMP and induces vasodilation. May promote natriuresis, at least in part, by enhancing prostaglandin E2 synthesis resulting in the inhibition of renal Na+-K+-ATPase. However reports on the involvement of this peptide in mammal blood volume and blood pressure homeostasis are conflicting; according to a report it is not sufficient to activate cGMP and does not inhibit collecting duct transport nor effect diuresis and natriuresis. Appears to bind to specific receptors that are distinct from the receptors bound by the atrial natriuretic and long-acting natriuretic peptides. Possibly functions in protein excretion in urine by maintaining the integrity of the proximal tubules and enhancing protein excretion by decreasing proximal tubular protein reabsorption. Functionally, may have a role in cardio-renal homeostasis through regulation of diuresis and inhibiting aldosterone synthesis. In vitro, promotes the production of cGMP and induces vasodilation. May promote natriuresis, at least in part, by enhancing prostaglandin E2 synthesis resulting in the inhibition of renal Na+-K+-ATPase. May have a role in potassium excretion but not sodium excretion (natriuresis). Possibly enhances protein excretion in urine by decreasing proximal tubular protein reabsorption. Hormone produced in the kidneys that appears to be important for maintaining cardio-renal homeostasis. Mediates vasodilation, natriuresis and diuresis primarily in the renal system, in order to maintain the extracellular fluid volume and control the fluid-electrolyte balance. Specifically binds and stimulates cGMP production by renal transmembrane receptors, likely NPR1. Urodilatin not ANP, may be the natriuretic peptide responsible for the regulation of sodium and water homeostasis in the kidney. In terms of biological role, may have a role in cardio-renal homeostasis through regulation of natriuresis and vasodilation. In vivo promotes natriuresis and in vitro, vasodilates renal artery strips. Its function is as follows. May have a role in cardio-renal homeostasis through regulation of regulation of natriuresis and vasodilation. In vivo promotes natriuresis. In vitro, vasodilates intestinal smooth muscle but not smooth muscle strips. Functionally, may have a role in cardio-renal homeostasis through regulation of natriuresis and vasodilation. In vivo promotes natriuresis. In vitro, selectively vasodilates intestinal and vascular smooth muscle strips. May have a role in cardio-renal homeostasis through regulation of natriuresis and vasodilation. In vivo promotes natriuresis. In vitro, selectively vasodilates intestinal smooth muscle but not vascular smooth muscle strips. This chain is Natriuretic peptides A (NPPA), found in Ovis aries (Sheep).